A 223-amino-acid polypeptide reads, in one-letter code: Holliday junction branch migration complex subunit RuvA (223 aa).

Residues 1 to 64 (MIGKLTGRLD…EDLLQLFGFL (64 aa)) are domain I. The domain II stretch occupies residues 65-143 (SPYEKEWHRL…AVMAMGGTLD (79 aa)). A flexible linker region spans residues 144-171 (DAMDDVVDDMPGESAAPAPAPQPRAPKR). The disordered stretch occupies residues 148–177 (DVVDDMPGESAAPAPAPQPRAPKRPASNAQ). The domain III stretch occupies residues 172 to 223 (PASNAQAEALSALQNLGYGPSDAAQAVAQAAESASNTPELIRAALRLLAPKE).

Belongs to the RuvA family. Homotetramer. Forms an RuvA(8)-RuvB(12)-Holliday junction (HJ) complex. HJ DNA is sandwiched between 2 RuvA tetramers; dsDNA enters through RuvA and exits via RuvB. An RuvB hexamer assembles on each DNA strand where it exits the tetramer. Each RuvB hexamer is contacted by two RuvA subunits (via domain III) on 2 adjacent RuvB subunits; this complex drives branch migration. In the full resolvosome a probable DNA-RuvA(4)-RuvB(12)-RuvC(2) complex forms which resolves the HJ.

The protein localises to the cytoplasm. The RuvA-RuvB-RuvC complex processes Holliday junction (HJ) DNA during genetic recombination and DNA repair, while the RuvA-RuvB complex plays an important role in the rescue of blocked DNA replication forks via replication fork reversal (RFR). RuvA specifically binds to HJ cruciform DNA, conferring on it an open structure. The RuvB hexamer acts as an ATP-dependent pump, pulling dsDNA into and through the RuvAB complex. HJ branch migration allows RuvC to scan DNA until it finds its consensus sequence, where it cleaves and resolves the cruciform DNA. This is Holliday junction branch migration complex subunit RuvA from Jannaschia sp. (strain CCS1).